The following is an 803-amino-acid chain: Phosphoribosylformylglycinamidine synthase subunit PurL (803 aa).

H65 is an active-site residue. 2 residues coordinate ATP: Y68 and K107. E109 contributes to the Mg(2+) binding site. Substrate is bound by residues 110-113 (SHNH) and R132. Catalysis depends on H111, which acts as the Proton acceptor. Mg(2+) is bound at residue D133. Substrate is bound at residue Q256. D284 lines the Mg(2+) pocket. Residue 328–330 (ESQ) coordinates substrate. N537 and G574 together coordinate ATP. N575 is a Mg(2+) binding site. A substrate-binding site is contributed by S577.

It belongs to the FGAMS family. As to quaternary structure, monomer. Part of the FGAM synthase complex composed of 1 PurL, 1 PurQ and 2 PurS subunits.

It is found in the cytoplasm. It catalyses the reaction N(2)-formyl-N(1)-(5-phospho-beta-D-ribosyl)glycinamide + L-glutamine + ATP + H2O = 2-formamido-N(1)-(5-O-phospho-beta-D-ribosyl)acetamidine + L-glutamate + ADP + phosphate + H(+). It participates in purine metabolism; IMP biosynthesis via de novo pathway; 5-amino-1-(5-phospho-D-ribosyl)imidazole from N(2)-formyl-N(1)-(5-phospho-D-ribosyl)glycinamide: step 1/2. Part of the phosphoribosylformylglycinamidine synthase complex involved in the purines biosynthetic pathway. Catalyzes the ATP-dependent conversion of formylglycinamide ribonucleotide (FGAR) and glutamine to yield formylglycinamidine ribonucleotide (FGAM) and glutamate. The FGAM synthase complex is composed of three subunits. PurQ produces an ammonia molecule by converting glutamine to glutamate. PurL transfers the ammonia molecule to FGAR to form FGAM in an ATP-dependent manner. PurS interacts with PurQ and PurL and is thought to assist in the transfer of the ammonia molecule from PurQ to PurL. The sequence is that of Phosphoribosylformylglycinamidine synthase subunit PurL from Prochlorococcus marinus (strain NATL1A).